We begin with the raw amino-acid sequence, 235 residues long: Purine nucleoside phosphorylase DeoD-type (235 aa).

H4 contacts a purine D-ribonucleoside. Phosphate is bound by residues G20, R24, R43, and 87 to 90 (RVGT). A purine D-ribonucleoside-binding positions include 179–181 (EME) and 203–204 (SD). D204 functions as the Proton donor in the catalytic mechanism.

Belongs to the PNP/UDP phosphorylase family. Homohexamer; trimer of homodimers.

The catalysed reaction is a purine D-ribonucleoside + phosphate = a purine nucleobase + alpha-D-ribose 1-phosphate. It carries out the reaction a purine 2'-deoxy-D-ribonucleoside + phosphate = a purine nucleobase + 2-deoxy-alpha-D-ribose 1-phosphate. Catalyzes the reversible phosphorolytic breakdown of the N-glycosidic bond in the beta-(deoxy)ribonucleoside molecules, with the formation of the corresponding free purine bases and pentose-1-phosphate. The protein is Purine nucleoside phosphorylase DeoD-type of Brevibacillus brevis (strain 47 / JCM 6285 / NBRC 100599).